The sequence spans 259 residues: Glucose-1-phosphate thymidylyltransferase (259 aa).

Belongs to the inositol monophosphatase superfamily.

It catalyses the reaction dTTP + alpha-D-glucose 1-phosphate + H(+) = dTDP-alpha-D-glucose + diphosphate. The protein operates within antibiotic biosynthesis; streptomycin biosynthesis. The protein is Glucose-1-phosphate thymidylyltransferase (strO) of Streptomyces griseus.